A 125-amino-acid chain; its full sequence is Cystatin-like cysteine protease inhibitor EPIC2B (125 aa).

The signal sequence occupies residues methionine 1–glycine 21. Asparagine 45 carries an N-linked (GlcNAc...) asparagine glycan. Residues glutamine 68 to glycine 72 carry the Secondary area of contact motif.

It belongs to the cystatin family. As to quaternary structure, interacts with the host papain-like cysteine protease PIP1. Interacts with the host papain-like cysteine protease RCR3. Interacts with the host papain-like cysteine protease C14.

Its subcellular location is the secreted. Its function is as follows. Secreted effector that interacts with and inhibits the pathogenesis-related papain-like cysteine proteases C14, PIP1 and RCR3 of host plants. Inhibition of host proteases by a pathogen extracellular protease inhibitor forms a specific type of defense-counterdefense mechanism between plants and microbial pathogens. The polypeptide is Cystatin-like cysteine protease inhibitor EPIC2B (Phytophthora infestans (Potato late blight agent)).